The sequence spans 84 residues: uncharacterized protein (84 aa).

A run of 2 helical transmembrane segments spans residues 27 to 47 and 52 to 72; these read INHH…LAML and IGHV…FVLI.

To M.tuberculosis Rv2876.

The protein resides in the cell membrane. This is an uncharacterized protein from Mycobacterium leprae (strain TN).